A 242-amino-acid polypeptide reads, in one-letter code: Endoglucanase-5 (242 aa).

Residues 1–17 (MKATLVLGSLIVGAVSA) form the signal peptide. The tract at residues 18–182 (YKATTTRYYD…ETDPTPVLGN (165 aa)) is catalytic. Aspartate 27 acts as the Nucleophile in catalysis. Aspartate 134 functions as the Proton donor in the catalytic mechanism. The tract at residues 177 to 206 (TPVLGNDTGSTPPGSSPPATSSSPPSGGGQ) is disordered. N-linked (GlcNAc...) asparagine glycosylation is present at asparagine 182. Over residues 184–201 (TGSTPPGSSPPATSSSPP) the composition is skewed to low complexity. One can recognise a CBM1 domain in the interval 205-241 (GQQTLYGQCGGAGWTGPTTCQAPGTCKVQNQWYSQCL). Cystine bridges form between cysteine 213–cysteine 230 and cysteine 224–cysteine 240.

This sequence belongs to the glycosyl hydrolase 45 (cellulase K) family.

The catalysed reaction is Endohydrolysis of (1-&gt;4)-beta-D-glucosidic linkages in cellulose, lichenin and cereal beta-D-glucans.. In Hypocrea jecorina (Trichoderma reesei), this protein is Endoglucanase-5 (egl5).